A 168-amino-acid polypeptide reads, in one-letter code: Phosphopantetheine adenylyltransferase (168 aa).

A substrate-binding site is contributed by Ser-8. Residues Ser-8–Phe-9 and His-16 each bind ATP. Substrate is bound by residues Lys-40, Ala-72, and Arg-86. ATP-binding positions include Gly-87–Arg-89, Glu-97, and Tyr-122–Ser-128.

The protein belongs to the bacterial CoaD family. As to quaternary structure, homohexamer. It depends on Mg(2+) as a cofactor.

It is found in the cytoplasm. The enzyme catalyses (R)-4'-phosphopantetheine + ATP + H(+) = 3'-dephospho-CoA + diphosphate. It functions in the pathway cofactor biosynthesis; coenzyme A biosynthesis; CoA from (R)-pantothenate: step 4/5. Functionally, reversibly transfers an adenylyl group from ATP to 4'-phosphopantetheine, yielding dephospho-CoA (dPCoA) and pyrophosphate. In Trichodesmium erythraeum (strain IMS101), this protein is Phosphopantetheine adenylyltransferase.